Consider the following 60-residue polypeptide: UPF0434 protein SG0997 (60 aa).

It belongs to the UPF0434 family.

In Sodalis glossinidius (strain morsitans), this protein is UPF0434 protein SG0997.